The sequence spans 147 residues: MIYWIFLGLAIIAEIIGTLSMKYASVSGEMTGHIVMYFMITGSYVMLSLAVKKVALGVAYALWEGIGILIITIFSVMWFGETLSPLKIAGLVTLIGGILLVKSGTRKPKQPNRHRGNRPPSVQGLKTQTTGHHKGVAVESGEHHAAA.

4 helical membrane-spanning segments follow: residues 1-21 (MIYWIFLGLAIIAEIIGTLSM), 31-51 (TGHIVMYFMITGSYVMLSLAV), 54-74 (VALGVAYALWEGIGILIITIF), and 81-101 (ETLSPLKIAGLVTLIGGILLV). Residues 105–117 (TRKPKQPNRHRGN) show a composition bias toward basic residues. The segment at 105 to 147 (TRKPKQPNRHRGNRPPSVQGLKTQTTGHHKGVAVESGEHHAAA) is disordered.

Belongs to the drug/metabolite transporter (DMT) superfamily. Small multidrug resistance (SMR) (TC 2.A.7.1) family. MdtJ subfamily. In terms of assembly, forms a complex with MdtI.

The protein resides in the cell inner membrane. Functionally, catalyzes the excretion of spermidine. This is Spermidine export protein MdtJ from Yersinia pseudotuberculosis serotype O:3 (strain YPIII).